The following is a 278-amino-acid chain: Truncated FRIGIDA-like protein 1 (278 aa).

The stretch at Met-1–Ser-36 forms a coiled coil.

It belongs to the Frigida family.

Functionally, truncated inactive FRIGIDA-like 1 protein. In Arabidopsis thaliana (Mouse-ear cress), this protein is Truncated FRIGIDA-like protein 1 (FRL1).